The primary structure comprises 312 residues: Putative tricarboxylate transport protein, mitochondrial (312 aa).

Solcar repeat units lie at residues 23–111 (EKTV…LKSQ), 122–208 (VMRL…LKDW), and 218–303 (ISKP…IIEF). The next 6 helical transmembrane spans lie at 29 to 49 (IVIG…TEYV), 75 to 95 (VNGH…YGSI), 126 to 146 (LCGL…METV), 164 to 184 (FVHG…YKGV), 221 to 241 (PIVG…NTPI), and 286 to 306 (VCLD…FLDV).

This sequence belongs to the mitochondrial carrier (TC 2.A.29) family.

The protein localises to the mitochondrion inner membrane. Functionally, transport of citrate across inner mitochondrial membrane. In Caenorhabditis elegans, this protein is Putative tricarboxylate transport protein, mitochondrial.